The following is a 262-amino-acid chain: ATP synthase subunit a (262 aa).

The next 5 helical transmembrane spans lie at 26 to 46, 86 to 106, 130 to 150, 204 to 226, and 240 to 260; these read VHIDTLFFSILAAVIFLFVFS, VAPLALTIFCWVFIMNAIDLI, DISATLGMSICVFFLILFYTI, LIFILIAVMYSANMAIAALGIPL, and LQAFIFMMLTVVYLSIAYNKA.

Belongs to the ATPase A chain family. In terms of assembly, F-type ATPases have 2 components, CF(1) - the catalytic core - and CF(0) - the membrane proton channel. CF(1) has five subunits: alpha(3), beta(3), gamma(1), delta(1), epsilon(1). CF(0) has three main subunits: a(1), b(2) and c(9-12). The alpha and beta chains form an alternating ring which encloses part of the gamma chain. CF(1) is attached to CF(0) by a central stalk formed by the gamma and epsilon chains, while a peripheral stalk is formed by the delta and b chains.

It localises to the cell inner membrane. Functionally, key component of the proton channel; it plays a direct role in the translocation of protons across the membrane. The polypeptide is ATP synthase subunit a (Haemophilus influenzae (strain PittEE)).